Reading from the N-terminus, the 880-residue chain is Valine--tRNA ligase (880 aa).

The short motif at 49 to 59 (PNVTGKLHLGH) is the 'HIGH' region element. The short motif at 525–529 (KMSKS) is the 'KMSKS' region element. Lys-528 contributes to the ATP binding site. A coiled-coil region spans residues 809-880 (LEGLINIDEE…VEKRIAELKN (72 aa)).

Belongs to the class-I aminoacyl-tRNA synthetase family. ValS type 1 subfamily. As to quaternary structure, monomer.

The protein resides in the cytoplasm. It carries out the reaction tRNA(Val) + L-valine + ATP = L-valyl-tRNA(Val) + AMP + diphosphate. In terms of biological role, catalyzes the attachment of valine to tRNA(Val). As ValRS can inadvertently accommodate and process structurally similar amino acids such as threonine, to avoid such errors, it has a 'posttransfer' editing activity that hydrolyzes mischarged Thr-tRNA(Val) in a tRNA-dependent manner. The protein is Valine--tRNA ligase of Bacillus licheniformis (strain ATCC 14580 / DSM 13 / JCM 2505 / CCUG 7422 / NBRC 12200 / NCIMB 9375 / NCTC 10341 / NRRL NRS-1264 / Gibson 46).